We begin with the raw amino-acid sequence, 342 residues long: L-threonine 3-dehydrogenase (342 aa).

Zn(2+) is bound at residue cysteine 38. Active-site charge relay system residues include threonine 40 and histidine 43. The Zn(2+) site is built by histidine 63, glutamate 64, cysteine 93, cysteine 96, cysteine 99, and cysteine 107. NAD(+) contacts are provided by residues isoleucine 175, aspartate 195, arginine 200, 262–264, and 286–287; these read LGI and IY.

It belongs to the zinc-containing alcohol dehydrogenase family. Homotetramer. Zn(2+) serves as cofactor.

The protein localises to the cytoplasm. The enzyme catalyses L-threonine + NAD(+) = (2S)-2-amino-3-oxobutanoate + NADH + H(+). The protein operates within amino-acid degradation; L-threonine degradation via oxydo-reductase pathway; glycine from L-threonine: step 1/2. Catalyzes the NAD(+)-dependent oxidation of L-threonine to 2-amino-3-ketobutyrate. This Aeromonas salmonicida (strain A449) protein is L-threonine 3-dehydrogenase.